Here is a 119-residue protein sequence, read N- to C-terminus: Ribonuclease P protein component (119 aa).

This sequence belongs to the RnpA family. In terms of assembly, consists of a catalytic RNA component (M1 or rnpB) and a protein subunit.

The enzyme catalyses Endonucleolytic cleavage of RNA, removing 5'-extranucleotides from tRNA precursor.. RNaseP catalyzes the removal of the 5'-leader sequence from pre-tRNA to produce the mature 5'-terminus. It can also cleave other RNA substrates such as 4.5S RNA. The protein component plays an auxiliary but essential role in vivo by binding to the 5'-leader sequence and broadening the substrate specificity of the ribozyme. This chain is Ribonuclease P protein component, found in Haemophilus influenzae (strain 86-028NP).